The chain runs to 640 residues: 1-deoxy-D-xylulose-5-phosphate synthase (640 aa).

Thiamine diphosphate-binding positions include His79 and 120 to 122 (GHS). Position 151 (Asp151) interacts with Mg(2+). Residues 152-153 (GS), Asn180, Tyr290, and Glu372 each bind thiamine diphosphate. Residue Asn180 participates in Mg(2+) binding.

It belongs to the transketolase family. DXPS subfamily. In terms of assembly, homodimer. It depends on Mg(2+) as a cofactor. Thiamine diphosphate is required as a cofactor.

The enzyme catalyses D-glyceraldehyde 3-phosphate + pyruvate + H(+) = 1-deoxy-D-xylulose 5-phosphate + CO2. The protein operates within metabolic intermediate biosynthesis; 1-deoxy-D-xylulose 5-phosphate biosynthesis; 1-deoxy-D-xylulose 5-phosphate from D-glyceraldehyde 3-phosphate and pyruvate: step 1/1. Catalyzes the acyloin condensation reaction between C atoms 2 and 3 of pyruvate and glyceraldehyde 3-phosphate to yield 1-deoxy-D-xylulose-5-phosphate (DXP). This is 1-deoxy-D-xylulose-5-phosphate synthase from Rhodopseudomonas palustris (strain BisA53).